A 155-amino-acid chain; its full sequence is Microsomal glutathione S-transferase 1 (155 aa).

Over 3–9 the chain is Lumenal; the sequence is DLKQLMD. Residues 10–33 traverse the membrane as a helical segment; the sequence is NEVLMAFTSYATIILAKMMFLSSA. Residues 34–62 are Cytoplasmic-facing; that stretch reads TAFQRLTNKVFANPEDCAGFGKGENAKKF. Arg-38 provides a ligand contact to glutathione. N6-acetyllysine is present on residues Lys-42, Lys-55, and Lys-60. The helical transmembrane segment at 63-96 threads the bilayer; sequence LRTDEKVERVRRAHLNDLENIVPFLGIGLLYSLS. Arg-73, Arg-74, His-76, and Glu-81 together coordinate glutathione. Tyr-93 carries the 3'-nitrotyrosine; in vitro modification. Topologically, residues 97–99 are lumenal; sequence GPD. The helical transmembrane segment at 100 to 123 threads the bilayer; sequence LSTALIHFRIFVGARIYHTIAYLT. Tyr-121 provides a ligand contact to glutathione. At 124–128 the chain is on the cytoplasmic side; the sequence is PLPQP. The chain crosses the membrane as a helical span at residues 129 to 148; that stretch reads NRGLAFFVGYGVTLSMAYRL. Over 149 to 155 the chain is Lumenal; it reads LRSRLYL.

It belongs to the MAPEG family. Homotrimer; The trimer binds only one molecule of glutathione. In terms of processing, in vitro, peroxynitrite induces nitration at Tyr-93 which activates the enzyme. In terms of tissue distribution, highest in the liver, followed by kidney and testis and much lower in seminal vesicles, spleen, lung and brain.

Its subcellular location is the endoplasmic reticulum membrane. It localises to the mitochondrion outer membrane. It catalyses the reaction RX + glutathione = an S-substituted glutathione + a halide anion + H(+). With respect to regulation, in vitro, can be activated by reagents that attack Cys-50 sulfhydryl, such as N-ethylmaleimide and via nitration of Tyr-93 by peroxynitrite. Conjugation of reduced glutathione to a wide number of exogenous and endogenous hydrophobic electrophiles. This is Microsomal glutathione S-transferase 1 (Mgst1) from Rattus norvegicus (Rat).